Reading from the N-terminus, the 308-residue chain is Cis-prenyltransferase 4, chloroplastic (308 aa).

The N-terminal 45 residues, 1 to 45, are a transit peptide targeting the chloroplast; that stretch reads MAFSLQLQQIFVSYTRFCSQPKSITNPLISLKLPSIHPLAFAQNA. The active site involves Asp-84.

Belongs to the UPP synthase family. Mg(2+) serves as cofactor. Widely expressed.

The protein localises to the plastid. Its subcellular location is the chloroplast. Uses neryl diphosphate and geranyl diphosphate to catalyze the cis-prenyl chain elongation and produce polyprenyl diphosphate with a chain of 55 carbons. The chain is Cis-prenyltransferase 4, chloroplastic from Solanum lycopersicum (Tomato).